A 338-amino-acid chain; its full sequence is Ketol-acid reductoisomerase (NADP(+)) (338 aa).

The 181-residue stretch at 1-181 (MKVFYDKDAD…GGGRAGIIET (181 aa)) folds into the KARI N-terminal Rossmann domain. NADP(+) is bound by residues 24 to 27 (YGSQ), Arg47, and Ser52. The active site involves His107. Gly133 serves as a coordination point for NADP(+). A KARI C-terminal knotted domain is found at 182–327 (NFREETETDL…SKLRAMMPWI (146 aa)). Mg(2+) is bound by residues Asp190, Glu194, Glu226, and Glu230. Ser251 lines the substrate pocket.

The protein belongs to the ketol-acid reductoisomerase family. Requires Mg(2+) as cofactor.

It catalyses the reaction (2R)-2,3-dihydroxy-3-methylbutanoate + NADP(+) = (2S)-2-acetolactate + NADPH + H(+). The catalysed reaction is (2R,3R)-2,3-dihydroxy-3-methylpentanoate + NADP(+) = (S)-2-ethyl-2-hydroxy-3-oxobutanoate + NADPH + H(+). It functions in the pathway amino-acid biosynthesis; L-isoleucine biosynthesis; L-isoleucine from 2-oxobutanoate: step 2/4. The protein operates within amino-acid biosynthesis; L-valine biosynthesis; L-valine from pyruvate: step 2/4. Its function is as follows. Involved in the biosynthesis of branched-chain amino acids (BCAA). Catalyzes an alkyl-migration followed by a ketol-acid reduction of (S)-2-acetolactate (S2AL) to yield (R)-2,3-dihydroxy-isovalerate. In the isomerase reaction, S2AL is rearranged via a Mg-dependent methyl migration to produce 3-hydroxy-3-methyl-2-ketobutyrate (HMKB). In the reductase reaction, this 2-ketoacid undergoes a metal-dependent reduction by NADPH to yield (R)-2,3-dihydroxy-isovalerate. This is Ketol-acid reductoisomerase (NADP(+)) from Burkholderia thailandensis (strain ATCC 700388 / DSM 13276 / CCUG 48851 / CIP 106301 / E264).